The primary structure comprises 290 residues: UPF0046 protein K07C11.7 (290 aa).

The N-terminal stretch at 1–22 is a signal peptide; sequence MFHFSIGTVLISICWLAQWMEA. N204 is a glycosylation site (N-linked (GlcNAc...) asparagine).

The protein belongs to the UPF0046 family.

This Caenorhabditis elegans protein is UPF0046 protein K07C11.7.